The chain runs to 504 residues: L-carnitine/gamma-butyrobetaine antiporter (504 aa).

A run of 12 helical transmembrane segments spans residues 10 to 30, 51 to 71, 92 to 112, 143 to 163, 195 to 215, 231 to 251, 263 to 283, 316 to 336, 347 to 367, 398 to 418, 446 to 466, and 475 to 495; these read IEPK…WLTV, WGWA…WLVF, IFMM…SIEI, GPLP…FFFV, FYLV…TPLV, LDAI…ACGL, SYLS…SFIM, WTVF…IFLA, LCFG…TVLG, WAAL…CFIA, LLVR…LLAL, and AIIA…LSFI.

Belongs to the BCCT transporter (TC 2.A.15) family. CaiT subfamily. As to quaternary structure, homotrimer.

It localises to the cell inner membrane. It catalyses the reaction 4-(trimethylamino)butanoate(in) + (R)-carnitine(out) = 4-(trimethylamino)butanoate(out) + (R)-carnitine(in). It participates in amine and polyamine metabolism; carnitine metabolism. Catalyzes the exchange of L-carnitine for gamma-butyrobetaine. The chain is L-carnitine/gamma-butyrobetaine antiporter from Escherichia coli O157:H7.